Here is a 344-residue protein sequence, read N- to C-terminus: Protein RecA (344 aa).

66–73 (GPESSGKT) lines the ATP pocket.

This sequence belongs to the RecA family.

Its subcellular location is the cytoplasm. Functionally, can catalyze the hydrolysis of ATP in the presence of single-stranded DNA, the ATP-dependent uptake of single-stranded DNA by duplex DNA, and the ATP-dependent hybridization of homologous single-stranded DNAs. It interacts with LexA causing its activation and leading to its autocatalytic cleavage. This Methylobacillus flagellatus protein is Protein RecA.